Reading from the N-terminus, the 1037-residue chain is Protein brain tumor (1037 aa).

Disordered regions lie at residues 29–63 (SDSP…SRSE) and 159–178 (SNSS…SPPR). Composition is skewed to polar residues over residues 31 to 42 (SPLTLSGSSPPA) and 54 to 63 (GGSSVKSRSE). Low complexity predominate over residues 159-175 (SNSSSNSSSSNTSANGS). Residues 174 to 222 (GSPPRCTACKSKCSDAVAKCFECQSYLCANCVTAHEFMHCFNGHNVCLI) form a B box-type 1; atypical zinc finger. Residues C179, C182, C204, H208, C328, H331, C351, and H356 each coordinate Zn(2+). The B box-type 2 zinc finger occupies 323-366 (QRQLFCPRHKQELLKFSCRTCCILVCKECIVLEHSTGLHELENV). A compositionally biased stretch (polar residues) spans 543-554 (GPTGMSLTSNGH). The tract at residues 543-606 (GPTGMSLTSN…TAHHQQLQAQ (64 aa)) is disordered. A compositionally biased stretch (low complexity) spans 565 to 577 (QSASNSSASSAGS). Positions 579–598 (HHGHHQQSHHHGHHNHHQTA) are enriched in basic residues. 5 NHL repeats span residues 767 to 810 (HCKF…FDKE), 814 to 859 (KFQF…YNQY), 860 to 901 (GQFV…FDQN), 902 to 944 (GNVL…FNYE), and 945 to 988 (GQYL…FTQD).

As to quaternary structure, interacts with nanos (nos) and pum. Acts via the formation of a quaternary complex composed of pum, nanos, brat and the 3'-UTR mRNA of hb. Not recruited by nanos and pum to cyclin B 3'-UTR mRNA. Might interact with mira; the interaction seems to be important for brat localization during mitosis. Interacts with Ago1. In terms of tissue distribution, expressed during embryogenesis, mainly in nervous tissues. Expressed in the embryonic central and peripheral nervous systems including the embryonic brain. In third instar larva it is expressed in the larval central nervous system including the brain and the ventral ganglion, in two glands (the ring gland and the salivary gland, and in parts of the foregut) the gastric caeca and the proventriculus.

It localises to the cytoplasm. It is found in the cell cortex. Functionally, a NHL-domain family protein that functions as a translational repressor to inhibit cell proliferation. Plays a central role in translation repression of hb mRNA by being recruited by nanos (nos) and pum to the Nanos Response Element (NRE), a 16 bp sequence in the hb mRNA 3'-UTR. Probably recruited by other proteins to repress translation of other mRNAs in other tissues. Negatively regulates expression of Myc in a 3'-UTR dependent manner in both neural progenitor and epithelial cells. Regulates expression of mei-P26, possibly at transcriptional level. Involved in the regulation of ribosomal RNA synthesis and cell growth. Participates in abdominal segmentation and imaginal disk development. During neuroblast division, segregates asymmetrically and inhibits self-renewal of one of the two daughter cells. Together with the asymmetrically segregating transcription factor prospero ensures that the daughter cell will stop growing, exit the cell cycle, and differentiate into neurons possibly by modulating the function of dm in ganglion mother cells (GMC). Restricts developmental potential of type II intermediary neuronal progenitor (INP) cells playing a role in proliferation and maturation of the neuroblasts. This chain is Protein brain tumor, found in Drosophila melanogaster (Fruit fly).